We begin with the raw amino-acid sequence, 203 residues long: LexA repressor (203 aa).

Residues 28 to 47 constitute a DNA-binding region (H-T-H motif); sequence IREIGDEFGITAKGAYDHLK. Active-site for autocatalytic cleavage activity residues include serine 127 and lysine 164.

It belongs to the peptidase S24 family. In terms of assembly, homodimer.

It catalyses the reaction Hydrolysis of Ala-|-Gly bond in repressor LexA.. Represses a number of genes involved in the response to DNA damage (SOS response), including recA and lexA. In the presence of single-stranded DNA, RecA interacts with LexA causing an autocatalytic cleavage which disrupts the DNA-binding part of LexA, leading to derepression of the SOS regulon and eventually DNA repair. This chain is LexA repressor, found in Leptospira borgpetersenii serovar Hardjo-bovis (strain JB197).